The primary structure comprises 239 residues: Transmembrane ascorbate ferrireductase 1 (239 aa).

The Cytoplasmic segment spans residues 1–7; the sequence is MAVRINA. A helical transmembrane segment spans residues 8–28; it reads MAVTFVAHALAVIAAIMVLVW. Residues 13-216 enclose the Cytochrome b561 domain; the sequence is VAHALAVIAA…FGAFVVLTAS (204 aa). Residues 29 to 45 are Lumenal-facing; the sequence is SISYRGGLAWEATNKNL. The chain crosses the membrane as a helical span at residues 46 to 66; the sequence is IFNLHPVLMLIGFIILGGEAI. A heme b-binding site is contributed by His-50. Residues 67 to 81 lie on the Cytoplasmic side of the membrane; the sequence is ISYKSLPLEKPVKKL. The chain crosses the membrane as a helical span at residues 82 to 102; that stretch reads IHLILHAIALALGIFGICAAF. His-83 and His-117 together coordinate heme b. At 103–119 the chain is on the lumenal side; the sequence is KNHNESHIPNLYSLHSW. A helical transmembrane segment spans residues 120–140; it reads IGIGVISLYGFQWVYSFIVFF. The Cytoplasmic segment spans residues 141 to 155; that stretch reads FPGGSTNLKSGLLPW. His-156 lines the heme b pocket. The chain crosses the membrane as a helical span at residues 156–176; sequence HAMLGLFVYILAVGNAALGFL. The Lumenal segment spans residues 177 to 193; sequence EKLTFLENGGLDKYGSE. The helical transmembrane segment at 194–214 threads the bilayer; sequence AFLINFTAIITILFGAFVVLT. Topologically, residues 215-239 are cytoplasmic; that stretch reads ASAESPSPSPSVSNDDSVDFSYSAI. The segment at 217 to 239 is disordered; the sequence is AESPSPSPSVSNDDSVDFSYSAI. Over residues 224-239 the composition is skewed to low complexity; it reads PSVSNDDSVDFSYSAI.

In terms of assembly, homodimer. Heme b is required as a cofactor. Expressed in roots, seedlings and leaves. Lower expression in flowers. Expressed in the L1 layer of the shoot apex, in the epidermis of leaf primordia and young leaves and in vascular bundles. In the differentiation zone of the root, detected in the pericycle and in the epidermis, but not in the cortex. Strongly expressed in the lateral part of the root cap and in the epidermis of the root tip, but not in the meristematic tissue. Not expressed in lateral roots. In mature embryos, expressed in the epidermis, cotyledon tips and root tips.

It localises to the vacuole membrane. The catalysed reaction is Fe(3+)(out) + L-ascorbate(in) = monodehydro-L-ascorbate radical(in) + Fe(2+)(out) + H(+). In terms of biological role, two-heme-containing cytochrome. Catalyzes ascorbate-dependent trans-membrane ferric-chelate reduction. Able to use dihydrolipoic acid (DHLA) as an alternative substrate to ascorbate. The protein is Transmembrane ascorbate ferrireductase 1 (CYB561A) of Arabidopsis thaliana (Mouse-ear cress).